A 181-amino-acid chain; its full sequence is Large ribosomal subunit protein uL6 (181 aa).

The protein belongs to the universal ribosomal protein uL6 family. Part of the 50S ribosomal subunit.

Its function is as follows. This protein binds to the 23S rRNA, and is important in its secondary structure. It is located near the subunit interface in the base of the L7/L12 stalk, and near the tRNA binding site of the peptidyltransferase center. The protein is Large ribosomal subunit protein uL6 of Synechococcus sp. (strain CC9605).